The following is a 522-amino-acid chain: Acetylcholine receptor subunit delta (522 aa).

Positions 1 to 21 (MGNIHFVYLLISCLYYSGCSG) are cleaved as a signal peptide. Over 22–245 (VNEEERLIND…VTFYLIIRRK (224 aa)) the chain is Extracellular. Asparagine 91, asparagine 164, and asparagine 229 each carry an N-linked (GlcNAc...) asparagine glycan. Cysteine 151 and cysteine 165 are oxidised to a cystine. A run of 3 helical transmembrane segments spans residues 246–270 (PLFY…AFYL), 278–295 (MSTA…LLLT), and 312–333 (YLMF…VLNF). Over 334 to 476 (HFRTPSTHVL…WNLVGQTIDR (143 aa)) the chain is Cytoplasmic. The residue at position 393 (tyrosine 393) is a Phosphotyrosine; by Tyr-kinases. A helical transmembrane segment spans residues 477 to 497 (LSMFIITPVMVLGTIFIFVMG).

It belongs to the ligand-gated ion channel (TC 1.A.9) family. Acetylcholine receptor (TC 1.A.9.1) subfamily. Pentamer of two alpha chains, and one each of the beta, delta, and gamma chains.

The protein localises to the postsynaptic cell membrane. The protein resides in the cell membrane. The catalysed reaction is K(+)(in) = K(+)(out). It carries out the reaction Na(+)(in) = Na(+)(out). After binding acetylcholine, the AChR responds by an extensive change in conformation that affects all subunits and leads to opening of an ion-conducting channel across the plasma membrane. The polypeptide is Acetylcholine receptor subunit delta (chrnd) (Tetronarce californica (Pacific electric ray)).